The following is a 690-amino-acid chain: Glutaminase A (690 aa).

The signal sequence occupies residues 1-20 (MMHFLSFCLSVASLVSYAGA). Asparagine 80, asparagine 96, asparagine 435, asparagine 508, asparagine 528, asparagine 538, and asparagine 571 each carry an N-linked (GlcNAc...) asparagine glycan.

This sequence belongs to the fungal glutaminase gtaA family.

It localises to the secreted. It carries out the reaction L-glutamine + H2O = L-glutamate + NH4(+). Activity is inhibited by about 80% in the presence of 18% sodium chloride. Its function is as follows. Glutaminase catalyzes the hydrolysis of glutamine to glutamic acid and plays a key role in nitrogen metabolism. Catalyzes the hydrolysis not only of L-glutamine but also of D-glutamine. This Aspergillus oryzae (strain ATCC 42149 / RIB 40) (Yellow koji mold) protein is Glutaminase A.